Consider the following 386-residue polypeptide: ADP,ATP carrier protein, mitochondrial (386 aa).

The N-terminal 76 residues, 1–76 (ADNQHPTVYQ…ANASPVFVQA (76 aa)), are a transit peptide targeting the mitochondrion. Solcar repeat units follow at residues 83–176 (AAFA…FKRL), 188–281 (KWFA…LKPV), and 289–375 (DSFF…LQVI). The next 5 membrane-spanning stretches (helical) occupy residues 85 to 112 (FATDFLMGGVSAAVSKTAAAPIERVKLL), 153 to 177 (TANVIRYFPTQALNFAFKDYFKRLF), 186 to 206 (YWKWFAGNLASGGGAGASSLL), 257 to 278 (FNISCVGIIVYRGLYFGMYDSL), and 292 to 312 (FASFALGWLITNGAGLASYPI). Residues Arg158 and Lys170 each contribute to the ADP site. Arg316 contributes to the ADP binding site. Positions 316–321 (RRRMMM) are important for transport activity. Positions 316–321 (RRRMMM) match the Nucleotide carrier signature motif motif. A helical membrane pass occupies residues 352–372 (AGANVLRAVAGAGVLAGYDKL).

The protein belongs to the mitochondrial carrier (TC 2.A.29) family. In terms of assembly, monomer.

Its subcellular location is the mitochondrion inner membrane. It catalyses the reaction ADP(in) + ATP(out) = ADP(out) + ATP(in). The matrix-open state (m-state) is inhibited by the membrane-permeable bongkrekic acid (BKA). The cytoplasmic-open state (c-state) is inhibited by the membrane-impermeable toxic inhibitor carboxyatractyloside (CATR). ADP:ATP antiporter that mediates import of ADP into the mitochondrial matrix for ATP synthesis, and export of ATP out to fuel the cell. Cycles between the cytoplasmic-open state (c-state) and the matrix-open state (m-state): operates by the alternating access mechanism with a single substrate-binding site intermittently exposed to either the cytosolic (c-state) or matrix (m-state) side of the inner mitochondrial membrane. The polypeptide is ADP,ATP carrier protein, mitochondrial (ANT1) (Solanum tuberosum (Potato)).